Here is a 73-residue protein sequence, read N- to C-terminus: Small ribosomal subunit protein bS18 (73 aa).

It belongs to the bacterial ribosomal protein bS18 family. Part of the 30S ribosomal subunit. Forms a tight heterodimer with protein bS6.

Its function is as follows. Binds as a heterodimer with protein bS6 to the central domain of the 16S rRNA, where it helps stabilize the platform of the 30S subunit. This Prochlorococcus marinus (strain NATL2A) protein is Small ribosomal subunit protein bS18.